The following is a 398-amino-acid chain: uncharacterized protein (398 aa).

The BIG2 domain maps to S240–S306.

This is an uncharacterized protein from Clostridium acetobutylicum (strain ATCC 824 / DSM 792 / JCM 1419 / IAM 19013 / LMG 5710 / NBRC 13948 / NRRL B-527 / VKM B-1787 / 2291 / W).